The chain runs to 90 residues: NELL2-interacting cell ontogeny regulator 1 (90 aa).

The N-terminal stretch at Met1–Ala28 is a signal peptide.

The protein belongs to the NICOL family. In terms of assembly, interacts with NELL2; triggers epididymal differentiation. Interacts with cell surface receptor TFRC; the interaction mediates uptake of NICOL1 into fibroblasts. In terms of tissue distribution, expression is enriched in both male and female reproductive organs, including the testis, epididymis, seminal vesicles, coagulating glands, ovary and uterus, and in various non-reproductive organs such as brain, thymus and liver. In testis, expressed in both germ cells and Sertoli cells. Also expressed at low levels in the kidney. Expressed during neocortex and cerebellum development.

The protein localises to the secreted. Its subcellular location is the cytoplasm. It localises to the perinuclear region. MRNA-binding protein which interacts with a range of target mRNAs including SERPINE1, ACTA2, CCN2 and COL4A1 and may promote extracellular matrix production. Binds to the 3'-UTR of SERPINE1 mRNA and stabilizes the mRNA, possibly by competing for binding with SERBP1 and preventing SERBP1-mediated mRNA degradation. Also binds to the 3'-UTR of ACTA2. Testis-derived lumicrine factor that triggers epididymal differentiation and sperm maturation. This is NELL2-interacting cell ontogeny regulator 1 from Mus musculus (Mouse).